The primary structure comprises 334 residues: MSSWMASIPSPGPEWAQIHLPFLPFRIQTYALIILTGIVVAAMWTSRRLTKRGAEPGVVLDVLLWAVPLGIIGARLYHVVTHPADFFYPGANVWNPFQPGAIWNIWEGGNAIFGALIGGAVGVGIGCRWTGLRFWTFADALAPALLLAQAIGRLGNYVNQELFGLPTSLPWGLEIASGNKAIPVGLPEGTLFQPLFLYEIVWNVIGVFVILWLERRFRLQWGRVLAVYLIWYGLGRSYLESIRIDPSEFSFLGIPSNVWAAFAAVVLGAIILRVQAQRHTGLEPGPYLPGREWVSPQAEVESGETDPEEILHADDDEERTGTHKPQATSLSGSN.

A run of 4 helical transmembrane segments spans residues 22-42 (FLPFRIQTYALIILTGIVVAA), 54-74 (AEPGVVLDVLLWAVPLGIIGA), 105-125 (IWEGGNAIFGALIGGAVGVGI), and 131-151 (GLRFWTFADALAPALLLAQAI). Arg-153 is a binding site for a 1,2-diacyl-sn-glycero-3-phospho-(1'-sn-glycerol). Helical transmembrane passes span 191 to 211 (LFQPLFLYEIVWNVIGVFVIL) and 251 to 271 (FLGIPSNVWAAFAAVVLGAII). Residues 296-334 (PQAEVESGETDPEEILHADDDEERTGTHKPQATSLSGSN) form a disordered region. The segment covering 301–318 (ESGETDPEEILHADDDEE) has biased composition (acidic residues). Positions 323 to 334 (HKPQATSLSGSN) are enriched in polar residues.

Belongs to the Lgt family.

Its subcellular location is the cell membrane. It catalyses the reaction L-cysteinyl-[prolipoprotein] + a 1,2-diacyl-sn-glycero-3-phospho-(1'-sn-glycerol) = an S-1,2-diacyl-sn-glyceryl-L-cysteinyl-[prolipoprotein] + sn-glycerol 1-phosphate + H(+). It functions in the pathway protein modification; lipoprotein biosynthesis (diacylglyceryl transfer). In terms of biological role, catalyzes the transfer of the diacylglyceryl group from phosphatidylglycerol to the sulfhydryl group of the N-terminal cysteine of a prolipoprotein, the first step in the formation of mature lipoproteins. The polypeptide is Phosphatidylglycerol--prolipoprotein diacylglyceryl transferase (Leifsonia xyli subsp. xyli (strain CTCB07)).